A 525-amino-acid polypeptide reads, in one-letter code: Protein disulfide-isomerase A2 (525 aa).

Positions Met1–Gly21 are cleaved as a signal peptide. The Thioredoxin 1 domain occupies Arg27 to Gly152. Catalysis depends on nucleophile residues Cys71 and Cys74. Cys71 and Cys74 form a disulfide bridge. Asn127 and Asn284 each carry an N-linked (GlcNAc...) asparagine glycan. The Thioredoxin 2 domain occupies Val367–Val496. Residues Cys418 and Cys421 each act as nucleophile in the active site. Cys418 and Cys421 form a disulfide bridge. Residues Asp492 to Leu525 are disordered. Residues Glu505–Pro514 show a composition bias toward pro residues. N-linked (GlcNAc...) asparagine glycosylation occurs at Asn516. A compositionally biased stretch (polar residues) spans Asn516–Leu525. Residues Lys522–Leu525 carry the Prevents secretion from ER motif.

It belongs to the protein disulfide isomerase family. Monomer; predominantly as monomer under reducing conditions. Homodimer; disulfide-linked. Part of a large chaperone multiprotein complex comprising DNAJB11, HSP90B1, HSPA5, HYOU, PDIA2, PDIA4, PDIA6, PPIB, SDF2L1, UGGT1 and very small amounts of ERP29, but not, or at very low levels, CALR nor CANX. The disulfide-linked homodimer exhibits an enhanced chaperone activity. Post-translationally, glycosylated. Highly expressed in pancreas (at protein level).

It is found in the endoplasmic reticulum lumen. It catalyses the reaction Catalyzes the rearrangement of -S-S- bonds in proteins.. In terms of biological role, acts as an intracellular estrogen-binding protein. May be involved in modulating cellular levels and biological functions of estrogens in the pancreas. May act as a chaperone that inhibits aggregation of misfolded proteins. In Homo sapiens (Human), this protein is Protein disulfide-isomerase A2 (PDIA2).